A 387-amino-acid polypeptide reads, in one-letter code: MEELQDVQLTEIKPLLTDKGSGQHFEDFDGQEHNIETAFGVVHVTMSGNARGNRPVLLTFHDIGLNHKSCFNSFFNFDDMHEITQHFAVCHIDAPGQQEGAPSFPTGYQYPTMDELAEMLCAVLTHLNLRSIIGIGVGAGAYVLSRFALNNPLLVEGLVLINIDPCAKGWIDWAASKLSFWTSNIVEIVLGQLFGDEELQSNLDLVQTYRLHIAQDINQDNLQLFVTSYNSRKDLEIERPIFGSSTPTNTIKCPVLLVVGDSSPAVDAVVECNSRLDPTRTTLLKMADCGGLPQAVQPGKLTEAIKYFVQGMGYIPHVQLSHLSTESVPSASMTRLVRSRTHSASSSGSMEMPRSRSHTSNAQLQSTSNNSLSNQIQETPHTIELSC.

A disordered region spans residues 329-387; the sequence is PSASMTRLVRSRTHSASSSGSMEMPRSRSHTSNAQLQSTSNNSLSNQIQETPHTIELSC. Over residues 359-377 the composition is skewed to low complexity; that stretch reads TSNAQLQSTSNNSLSNQIQ.

Belongs to the NDRG family.

The sequence is that of Protein NDRG3 from Xenopus tropicalis (Western clawed frog).